The primary structure comprises 522 residues: TNF receptor-associated factor 6 (522 aa).

Residues 1 to 354 are interaction with TAX1BP1; that stretch reads MSLLNCENSC…EAQQCNGIYI (354 aa). The segment at 70–109 adopts an RING-type zinc-finger fold; it reads CPICLMALREAVQTPCGHRFCKACIIKSIRDAGHKCPVDN. Residue Lys-124 forms a Glycyl lysine isopeptide (Lys-Gly) (interchain with G-Cter in SUMO); alternate linkage. Lys-124 participates in a covalent cross-link: Glycyl lysine isopeptide (Lys-Gly) (interchain with G-Cter in ubiquitin); alternate. Residue Lys-142 forms a Glycyl lysine isopeptide (Lys-Gly) (interchain with G-Cter in SUMO) linkage. TRAF-type zinc fingers lie at residues 150 to 202 and 203 to 259; these read DHQA…EDKE and IHDQ…NHLA. A coiled-coil region spans residues 288 to 348; that stretch reads YISEVRNFQE…DKVAEIEAQQ (61 aa). Lys-319 is covalently cross-linked (Glycyl lysine isopeptide (Lys-Gly) (interchain with G-Cter in ubiquitin)). An MATH domain is found at 350 to 499; that stretch reads NGIYIWKIGN…DDTLLVRCEV (150 aa). Residues 355 to 522 form an interaction with TANK region; sequence WKIGNFGMHL…FQPRSTDAGV (168 aa). Lys-453 is covalently cross-linked (Glycyl lysine isopeptide (Lys-Gly) (interchain with G-Cter in SUMO)).

The protein belongs to the TNF receptor-associated factor family. A subfamily. In terms of assembly, homotrimer. Homooligomer. N-terminal region is dimeric while C-terminal region is trimeric; maybe providing a mode of oligomerization. Upon IL1B treatment, forms a complex with PELI1, IRAK1, IRAK4 and MYD88; this complex recruits MAP3K7/TAK1, TAB1 and TAB2 to mediate NF-kappa-B activation. Direct binding of SMAD6 to PELI1 prevents the complex formation and hence negatively regulates IL1R-TLR signaling and eventually NF-kappa-B-mediated gene expression. Binds to TNFRSF5/CD40 and TNFRSF11A/RANK. Associates with NGFR, TNFRSF17, IRAK2, IRAK3, RIPK2, MAP3K1, MAP3K5, MAP3K14, CSK, TRAF, TRAF-interacting protein TRIP and TNF receptor associated protein TDP2. Interacts with IL17R. Interacts with SQSTM1 bridging NTRK1 and NGFR. Forms a ternary complex with SQSTM1 and PRKCZ. Interacts with PELI2 and PELI3. Binds UBE2V1. Interacts with TAX1BP1; this interaction mediates deubiquitination of TRAF6 and inhibition of NF-kappa-B activation. Interacts with ZNF675. Interacts with ARRB1 and ARRB2. Interacts with MAP3K7 and TAB1/MAP3K7IP1; during IL-1 signaling. Interacts with UBE2N. Interacts with TGFBR1, HDAC1 and RANGAP1. Interacts with AKT1, AKT2 and AKT3. Interacts (via TRAF domains) with NUMBL (via C-terminal). Interacts with RBCK1. Interacts with LIMD1 (via LIM domains). Interacts with RSAD2/viperin. Interacts (via C-terminus) with EIF2AK2/PKR (via the kinase catalytic domain). Interacts with ZFAND5. Interacts with IL1RL1. Interacts with TRAFD1. Interacts with AJUBA. Interacts with MAVS/IPS1. Interacts (via TRAF domains) with DYNC2I2 (via WD domains). Interacts with IFIT3 (via N-terminus). Interacts with TICAM2. Interacts with CARD14. Interacts with CD40 and MAP3K8; the interaction is required for ERK activation. Interacts with TICAM1 and this interaction is enhanced in the presence of WDFY1. Interacts with TANK; this interaction increases in response to DNA damage. Interacts with USP10; this interaction increases in response to DNA damage. Interacts with ZC3H12A; this interaction increases in response to DNA damage and is stimulated by TANK. Interacts with WDFY3. Interacts with TRIM13. Interacts with GPS2. Interacts (via C-terminus) with SASH1. Interacts with LRRC19. Interacts with IL17RA and TRAF3IP2. Interacts with TOMM70. Interacts with AMBRA1; interaction is required to mediate 'Lys-63'-linked ubiquitination of ULK1. Interacts with CRBN; this interaction inhibits TLR4-mediated signaling by preventing TRAF6-mediated ubiquitination of ECSIT. In terms of processing, sumoylated on Lys-124, Lys-142 and Lys-453 with SUMO1. Polyubiquitinated on Lys-124 by TRAF3IP2; after cell stimulation with IL17A. Polyubiquitinated on Lys-124; after cell stimulation with IL1B or TGFB. This ligand-induced cell stimulation leads to dimerization/oligomerization of TRAF6 molecules, followed by auto-ubiquitination which involves UBE2N and UBE2V1 and leads to TRAF6 activation. This 'Lys-63' site-specific poly-ubiquitination appears to be associated with the activation of signaling molecules. Endogenous autoubiquitination occurs only for the cytoplasmic form. Deubiquitinated by USP10 in a TANK-dependent manner, leading to the negative regulation of NF-kappaB signaling upon DNA damage. LRRC19 induces 'Lys-63' ubiquitination. Ubiquitinated at Lys-319 by the SCF(FBXL2) complex, leading to its degradation by the proteasome. Post-translationally, (Microbial infection) Deubiquitinated by Epstein-Barr virus BPLF1 on both 'Lys-48' and 'Lys-63'-linked ubiquitin chains; leading to NF-kappa-B signaling inhibition. As to expression, expressed in heart, brain, placenta, lung, liver, skeletal muscle, kidney and pancreas.

Its subcellular location is the cytoplasm. It is found in the cell cortex. The protein resides in the nucleus. The protein localises to the lipid droplet. The catalysed reaction is S-ubiquitinyl-[E2 ubiquitin-conjugating enzyme]-L-cysteine + [acceptor protein]-L-lysine = [E2 ubiquitin-conjugating enzyme]-L-cysteine + N(6)-ubiquitinyl-[acceptor protein]-L-lysine.. The protein operates within protein modification; protein ubiquitination. In terms of biological role, E3 ubiquitin ligase that, together with UBE2N and UBE2V1, mediates the synthesis of 'Lys-63'-linked-polyubiquitin chains conjugated to proteins, such as ECSIT, IKBKG, IRAK1, AKT1 and AKT2. Also mediates ubiquitination of free/unanchored polyubiquitin chain that leads to MAP3K7 activation. Leads to the activation of NF-kappa-B and JUN. Seems to also play a role in dendritic cells (DCs) maturation and/or activation. Represses c-Myb-mediated transactivation, in B-lymphocytes. Adapter protein that seems to play a role in signal transduction initiated via TNF receptor, IL-1 receptor and IL-17 receptor. Regulates osteoclast differentiation by mediating the activation of adapter protein complex 1 (AP-1) and NF-kappa-B, in response to RANK-L stimulation. Together with MAP3K8, mediates CD40 signals that activate ERK in B-cells and macrophages, and thus may play a role in the regulation of immunoglobulin production. Acts as a regulator of the JNK and NF-kappa-B signaling pathways by initiating assembly of heterotypic 'Lys-63'-/'Lys-48'-linked branched ubiquitin chains that are then recognized by TAB2: TRAF6 catalyzes initial 'Lys-63'-linked-polyubiquitin chains that are then branched via 'Lys-48'-linked polyubiquitin by HUWE1. 'Lys-63'-/'Lys-48'-linked branched ubiquitin chains protect 'Lys-63'-linkages from CYLD deubiquitination. Participates also in the TCR signaling by ubiquitinating LAT. The polypeptide is TNF receptor-associated factor 6 (TRAF6) (Homo sapiens (Human)).